We begin with the raw amino-acid sequence, 282 residues long: Pantothenate synthetase (282 aa).

Residue 30 to 37 (MGYLHEGH) coordinates ATP. The active-site Proton donor is His-37. (R)-pantoate is bound at residue Gln-61. Gln-61 lines the beta-alanine pocket. 147 to 150 (GMKD) is a binding site for ATP. Gln-153 is a (R)-pantoate binding site. ATP-binding positions include Val-176 and 184–187 (KSSR).

It belongs to the pantothenate synthetase family. Homodimer.

It is found in the cytoplasm. The enzyme catalyses (R)-pantoate + beta-alanine + ATP = (R)-pantothenate + AMP + diphosphate + H(+). It participates in cofactor biosynthesis; (R)-pantothenate biosynthesis; (R)-pantothenate from (R)-pantoate and beta-alanine: step 1/1. In terms of biological role, catalyzes the condensation of pantoate with beta-alanine in an ATP-dependent reaction via a pantoyl-adenylate intermediate. In Bacillus mycoides (strain KBAB4) (Bacillus weihenstephanensis), this protein is Pantothenate synthetase.